The primary structure comprises 164 residues: OV-17 antigen (164 aa).

Positions 1 to 16 are cleaved as a signal peptide; that stretch reads MKFVILLTIGLLVVAA. Positions 24 to 43 are disordered; the sequence is QQQQQQQQQRDEREIPPFLE.

The protein belongs to the SXP/RAL-2 family. In terms of tissue distribution, high levels in the hypodermal layer of the adult female.

In Onchocerca volvulus, this protein is OV-17 antigen (OV17).